The following is a 690-amino-acid chain: Elongation factor G (690 aa).

Residues 8-283 form the tr-type G domain; sequence SKCRNIGIMA…AVVDFLPAPN (276 aa). GTP contacts are provided by residues 17–24, 81–85, and 135–138; these read AHIDAGKT, DTPGH, and NKMD.

It belongs to the TRAFAC class translation factor GTPase superfamily. Classic translation factor GTPase family. EF-G/EF-2 subfamily.

It is found in the cytoplasm. Its function is as follows. Catalyzes the GTP-dependent ribosomal translocation step during translation elongation. During this step, the ribosome changes from the pre-translocational (PRE) to the post-translocational (POST) state as the newly formed A-site-bound peptidyl-tRNA and P-site-bound deacylated tRNA move to the P and E sites, respectively. Catalyzes the coordinated movement of the two tRNA molecules, the mRNA and conformational changes in the ribosome. The chain is Elongation factor G from Ehrlichia chaffeensis (strain ATCC CRL-10679 / Arkansas).